Reading from the N-terminus, the 177-residue chain is Adenine phosphoribosyltransferase (177 aa).

Belongs to the purine/pyrimidine phosphoribosyltransferase family. In terms of assembly, homodimer.

Its subcellular location is the cytoplasm. It carries out the reaction AMP + diphosphate = 5-phospho-alpha-D-ribose 1-diphosphate + adenine. Its pathway is purine metabolism; AMP biosynthesis via salvage pathway; AMP from adenine: step 1/1. Functionally, catalyzes a salvage reaction resulting in the formation of AMP, that is energically less costly than de novo synthesis. The chain is Adenine phosphoribosyltransferase from Pelodictyon phaeoclathratiforme (strain DSM 5477 / BU-1).